The primary structure comprises 699 residues: Homeobox-leucine zipper protein HDG8 (699 aa).

The segment at 1–31 (MDNNGGGSSGNEQYTSGDAKQNGKRTCHRHT) is disordered. The segment covering 10–19 (GNEQYTSGDA) has biased composition (polar residues). The span at 22-31 (NGKRTCHRHT) shows a compositional bias: basic residues. Positions 23 to 82 (GKRTCHRHTPQQIQRLEAYFKECPHPDERQRNQLCRELKLEPDQIKFWFQNKRTQSKTQE) form a DNA-binding region, homeobox. Positions 89–149 (LLRGENETLQ…LKDHRDRISN (61 aa)) form a coiled coil. Residues 204-438 (AETDMSLLSE…LERMCERMAL (235 aa)) form the START domain.

The protein belongs to the HD-ZIP homeobox family. Class IV subfamily. In terms of assembly, interacts with ANT. Expressed in the embryo at early stage and in the endosperm.

It is found in the nucleus. Its function is as follows. Probable transcription factor. This Arabidopsis thaliana (Mouse-ear cress) protein is Homeobox-leucine zipper protein HDG8.